Consider the following 177-residue polypeptide: MTQKAKNTIYLLILIILSMLCLVYASVPLYSIFCKVTGYGGTVRTATATQSKLGKTTIKIRFNADINKELPWKFYPEIPYTTVKPGEQKLIFYRAENLTNEYVSGMAVYNVTPYKVGKYFNKVACFCFTKQTLSPYQKTIMPVSFFIDPNIETDPETSDVKLITLSYTFFKYKENTK.

Topologically, residues 1–8 (MTQKAKNT) are cytoplasmic. A helical; Signal-anchor for type II membrane protein membrane pass occupies residues 9–29 (IYLLILIILSMLCLVYASVPL). Over 30-177 (YSIFCKVTGY…TFFKYKENTK (148 aa)) the chain is Periplasmic.

This sequence belongs to the COX11/CtaG family.

The protein localises to the cell inner membrane. Exerts its effect at some terminal stage of cytochrome c oxidase synthesis, probably by being involved in the insertion of the copper B into subunit I. This Ehrlichia ruminantium (strain Welgevonden) protein is Cytochrome c oxidase assembly protein CtaG.